An 839-amino-acid polypeptide reads, in one-letter code: NT-3 growth factor receptor (839 aa).

Residues 1–31 form the signal peptide; the sequence is MDVSLCPAKCSFWRIFLLGSVWLDYVGSVLA. 2 cysteine pairs are disulfide-bonded: cysteine 32–cysteine 38 and cysteine 36–cysteine 45. The Extracellular portion of the chain corresponds to 32–429; it reads CPANCVCSKT…TVTHKPEEDT (398 aa). 2 N-linked (GlcNAc...) asparagine glycosylation sites follow: asparagine 72 and asparagine 79. LRR repeat units follow at residues 104 to 125 and 128 to 149; these read GLQK…AFAK and HLRY…LFQT. N-linked (GlcNAc...) asparagine glycosylation is found at asparagine 133 and asparagine 163. In terms of domain architecture, LRRCT spans 160 to 209; that stretch reads NFFNCSCDIRWMQLWQEQGEAKLNSQNLYCINADGSQLPLFRMNISQCDL. 2 cysteine pairs are disulfide-bonded: cysteine 164–cysteine 189 and cysteine 166–cysteine 207. N-linked (GlcNAc...) asparagine glycans are attached at residues asparagine 203, asparagine 218, asparagine 232, asparagine 259, asparagine 267, asparagine 272, and asparagine 294. 2 consecutive Ig-like C2-type domains span residues 210-300 and 309-382; these read PEIS…VALT and SLEE…IAKN. A disulfide bridge links cysteine 231 with cysteine 284. A disulfide bond links cysteine 320 and cysteine 362. Asparagine 375 and asparagine 388 each carry an N-linked (GlcNAc...) asparagine glycan. The chain crosses the membrane as a helical span at residues 430-453; the sequence is FGVSIAVGLAAFACVLLVVLFVMI. Residues 454-839 lie on the Cytoplasmic side of the membrane; the sequence is NKYGRRSKFG…ATPIYLDILG (386 aa). Serine 493 carries the phosphoserine modification. Position 516 is a phosphotyrosine; by autocatalysis (tyrosine 516). The region spanning 538 to 839 is the Protein kinase domain; the sequence is IVLKRELGEG…ATPIYLDILG (302 aa). ATP-binding positions include 544 to 552 and lysine 572; that span reads LGEGAFGKV. Aspartate 679 (proton acceptor) is an active-site residue. A phosphotyrosine; by autocatalysis mark is found at tyrosine 705, tyrosine 709, and tyrosine 710.

The protein belongs to the protein kinase superfamily. Tyr protein kinase family. Insulin receptor subfamily. Exists in a dynamic equilibrium between monomeric (low affinity) and dimeric (high affinity) structures. Binds SH2B2. Interacts with SQSTM1 and KIDINS220. Interacts with PTPRS. Interacts with MAPK8IP3/JIP3. Ligand-mediated auto-phosphorylation. In terms of tissue distribution, widely expressed but mainly in nervous tissue. Isoform 2 is expressed at higher levels in adult brain than in fetal brain.

The protein localises to the membrane. The enzyme catalyses L-tyrosyl-[protein] + ATP = O-phospho-L-tyrosyl-[protein] + ADP + H(+). In terms of biological role, receptor tyrosine kinase involved in nervous system and probably heart development. Upon binding of its ligand NTF3/neurotrophin-3, NTRK3 autophosphorylates and activates different signaling pathways, including the phosphatidylinositol 3-kinase/AKT and the MAPK pathways, that control cell survival and differentiation. The chain is NT-3 growth factor receptor (NTRK3) from Homo sapiens (Human).